A 700-amino-acid chain; its full sequence is Cap-specific mRNA (nucleoside-2'-O-)-methyltransferase 2 (700 aa).

The segment at 1-21 (MSFRSSPQGKPHPMTDYQSIR) is disordered. Residues 109-321 (EFVTVAWCKL…VYVICLNYNK (213 aa)) enclose the Adrift-type SAM-dependent 2'-O-MTase domain. Residue K117 is part of the active site. 3 residues coordinate S-adenosyl-L-methionine: G143, W164, and D234. The active site involves D234. K274 acts as the Proton acceptor in catalysis.

The protein resides in the nucleus. It catalyses the reaction a 5'-end (N(7)-methyl 5'-triphosphoguanosine)-(2'-O-methyl-ribonucleoside)-(ribonucleotide) in mRNA + S-adenosyl-L-methionine = a 5'-end (N(7)-methyl 5'-triphosphoguanosine)-(2'-O-methyl-ribonucleoside)-(2'-O-methyl-ribonucleotide) in mRNA + S-adenosyl-L-homocysteine + H(+). Its function is as follows. Probable S-adenosyl-L-methionine-dependent methyltransferase that mediates mRNA cap2 2'-O-ribose methylation to the 5'-cap structure of mRNAs. May methylate the ribose of the second nucleotide of a m(7)GpppG-capped mRNA (cap0) to produce m(7)GpppRmpNm (cap2). Regulates expression of tracheal genes required for pathfinding on the segmental nerve. The protein is Cap-specific mRNA (nucleoside-2'-O-)-methyltransferase 2 (cmtr2) of Drosophila melanogaster (Fruit fly).